We begin with the raw amino-acid sequence, 217 residues long: GTP-binding protein Rit2 (217 aa).

Residues 27-34 (GAGGVGKS), 74-78 (DTAGQ), and 133-136 (NKID) each bind GTP.

The protein belongs to the small GTPase superfamily. Ras family. Interacts with AFDN, the C-terminal domain of RALGDS and RLF, but not with RIN1 and PIK3CA. RLF binds exclusively to the active GTP-bound form. Binds calmodulin. Interacts with PLXNB3.

It is found in the nucleus. The protein resides in the cell membrane. It carries out the reaction GTP + H2O = GDP + phosphate + H(+). Its activity is regulated as follows. Alternates between an inactive form bound to GDP and an active form bound to GTP. In terms of biological role, binds and exchanges GTP and GDP. In Rattus norvegicus (Rat), this protein is GTP-binding protein Rit2 (Rit2).